The primary structure comprises 892 residues: Alanine--tRNA ligase (892 aa).

The Zn(2+) site is built by His-574, His-578, Cys-676, and His-680.

The protein belongs to the class-II aminoacyl-tRNA synthetase family. It depends on Zn(2+) as a cofactor.

Its subcellular location is the cytoplasm. It catalyses the reaction tRNA(Ala) + L-alanine + ATP = L-alanyl-tRNA(Ala) + AMP + diphosphate. Its function is as follows. Catalyzes the attachment of alanine to tRNA(Ala) in a two-step reaction: alanine is first activated by ATP to form Ala-AMP and then transferred to the acceptor end of tRNA(Ala). Also edits incorrectly charged Ser-tRNA(Ala) and Gly-tRNA(Ala) via its editing domain. This chain is Alanine--tRNA ligase, found in Prochlorococcus marinus (strain MIT 9313).